Reading from the N-terminus, the 432-residue chain is UPF0597 protein APL_1605 (432 aa).

It belongs to the UPF0597 family.

In Actinobacillus pleuropneumoniae serotype 5b (strain L20), this protein is UPF0597 protein APL_1605.